The primary structure comprises 462 residues: MEYRIERDTLGEIKVPADKLWAAQTQRSKENFPIGTEQMPLEIVKAFAILKKSAALSNQKLGKLSEEKAEAIVVAADEIIAGKWNEHFPLVVWQTGSGTQSNMNVNEVIANRGNQILKEKGSDVHIHPNDDVNMSQSSNDTFPTALHVACVLAVENHVLPAITKLKETLAEKVTAFEHIIKIGRTHLQDATPLTLGQEISGWHRMLEKTERMIAESNTYMKELAIGGTAVGTGINAHPKFGEMVSEEISQFTGKQFISAPNKFHALTSHDEVVYTHGALKALAADLMKIANDVRWLASGPRSGLGEIIIPANEPGSSIMPGKVNPTQSEALTMVVAQVMGNDATIGFAASQGNFELNVFKPVIAYNFLQSAHLLADAIVSFNDNCAVGIEADEEIIKENVNRSLMLVTALNPHIGYENAAKIAKHAHKEGLTLKEAALQSGLLTEEQFNEIVDPKKMIAPKE.

Substrate contacts are provided by residues 97-99, 127-130, 137-139, and Thr-185; these read SGT, HPND, and SSN. The active-site Proton donor/acceptor is His-186. Ser-316 is a catalytic residue. Substrate contacts are provided by residues Ser-317 and 322–324; that span reads KVN.

Belongs to the class-II fumarase/aspartase family. Fumarase subfamily. As to quaternary structure, homotetramer.

It localises to the cytoplasm. It carries out the reaction (S)-malate = fumarate + H2O. It functions in the pathway carbohydrate metabolism; tricarboxylic acid cycle; (S)-malate from fumarate: step 1/1. Its function is as follows. Involved in the TCA cycle. Catalyzes the stereospecific interconversion of fumarate to L-malate. The chain is Fumarate hydratase class II from Bacillus anthracis.